Consider the following 77-residue polypeptide: MESLMRLFLLLALLSSSHAGPKVTLQVKLTETFQDKTSQNSSALDMLQKICLLLHLPSGTNVTLLHKGPPHYLTCRA.

A signal peptide spans 1–19 (MESLMRLFLLLALLSSSHA). An N-linked (GlcNAc...) asparagine glycan is attached at Asn61.

In terms of processing, N-glycosylated. As to expression, expressed in lung, and specifically in alveolar type II epithelial cells.

It is found in the secreted. Its subcellular location is the cytoplasmic vesicle. It localises to the secretory vesicle. The protein localises to the golgi apparatus. Its function is as follows. Putative surfactant protein. The protein is Surfactant-associated protein 2 of Mus musculus (Mouse).